The following is an 80-amino-acid chain: Putative membrane protein insertion efficiency factor (80 aa).

The protein belongs to the UPF0161 family.

Its subcellular location is the cell membrane. In terms of biological role, could be involved in insertion of integral membrane proteins into the membrane. The sequence is that of Putative membrane protein insertion efficiency factor from Limosilactobacillus fermentum (strain NBRC 3956 / LMG 18251) (Lactobacillus fermentum).